The following is a 146-amino-acid chain: Anti-sigma F factor (146 aa).

The protein belongs to the anti-sigma-factor family.

The catalysed reaction is L-seryl-[protein] + ATP = O-phospho-L-seryl-[protein] + ADP + H(+). It carries out the reaction L-threonyl-[protein] + ATP = O-phospho-L-threonyl-[protein] + ADP + H(+). Functionally, binds to sigma F and blocks its ability to form an RNA polymerase holoenzyme (E-sigma F). Phosphorylates SpoIIAA on a serine residue. This phosphorylation may enable SpoIIAA to act as an anti-anti-sigma factor that counteracts SpoIIAB and thus releases sigma F from inhibition. This Bacillus licheniformis protein is Anti-sigma F factor.